Reading from the N-terminus, the 455-residue chain is Bifunctional protein GlmU (455 aa).

Residues 1 to 226 (MSLDIVILAA…AMEVQGANDR (226 aa)) form a pyrophosphorylase region. Residues 8-11 (LAAG), lysine 22, glutamine 73, 78-79 (GT), 99-101 (YGD), glycine 136, glutamate 151, asparagine 166, and asparagine 224 each bind UDP-N-acetyl-alpha-D-glucosamine. Residue aspartate 101 participates in Mg(2+) binding. Residue asparagine 224 participates in Mg(2+) binding. The tract at residues 227-247 (KQLSELERHYQLREARRLMAG) is linker. The tract at residues 248–455 (GVTLRDPARF…WKRPVKIRKD (208 aa)) is N-acetyltransferase. UDP-N-acetyl-alpha-D-glucosamine-binding residues include arginine 330 and lysine 348. The active-site Proton acceptor is the histidine 360. UDP-N-acetyl-alpha-D-glucosamine contacts are provided by tyrosine 363 and asparagine 374. Acetyl-CoA-binding positions include alanine 377, 383 to 384 (NY), serine 402, alanine 420, and arginine 437.

The protein in the N-terminal section; belongs to the N-acetylglucosamine-1-phosphate uridyltransferase family. This sequence in the C-terminal section; belongs to the transferase hexapeptide repeat family. In terms of assembly, homotrimer. Mg(2+) is required as a cofactor.

The protein localises to the cytoplasm. It catalyses the reaction alpha-D-glucosamine 1-phosphate + acetyl-CoA = N-acetyl-alpha-D-glucosamine 1-phosphate + CoA + H(+). The enzyme catalyses N-acetyl-alpha-D-glucosamine 1-phosphate + UTP + H(+) = UDP-N-acetyl-alpha-D-glucosamine + diphosphate. It participates in nucleotide-sugar biosynthesis; UDP-N-acetyl-alpha-D-glucosamine biosynthesis; N-acetyl-alpha-D-glucosamine 1-phosphate from alpha-D-glucosamine 6-phosphate (route II): step 2/2. Its pathway is nucleotide-sugar biosynthesis; UDP-N-acetyl-alpha-D-glucosamine biosynthesis; UDP-N-acetyl-alpha-D-glucosamine from N-acetyl-alpha-D-glucosamine 1-phosphate: step 1/1. The protein operates within bacterial outer membrane biogenesis; LPS lipid A biosynthesis. Catalyzes the last two sequential reactions in the de novo biosynthetic pathway for UDP-N-acetylglucosamine (UDP-GlcNAc). The C-terminal domain catalyzes the transfer of acetyl group from acetyl coenzyme A to glucosamine-1-phosphate (GlcN-1-P) to produce N-acetylglucosamine-1-phosphate (GlcNAc-1-P), which is converted into UDP-GlcNAc by the transfer of uridine 5-monophosphate (from uridine 5-triphosphate), a reaction catalyzed by the N-terminal domain. This is Bifunctional protein GlmU from Pseudomonas savastanoi pv. phaseolicola (strain 1448A / Race 6) (Pseudomonas syringae pv. phaseolicola (strain 1448A / Race 6)).